Here is a 319-residue protein sequence, read N- to C-terminus: Phosphatidylglycerol--prolipoprotein diacylglyceryl transferase (319 aa).

The next 3 helical transmembrane spans lie at 21–41, 50–70, and 98–118; these read PIPI…AIWL, GGNP…GIIG, and NGGL…AVFF. Arginine 144 provides a ligand contact to a 1,2-diacyl-sn-glycero-3-phospho-(1'-sn-glycerol). 2 helical membrane-spanning segments follow: residues 191–211 and 254–274; these read VHPT…LLMW and INTI…FLLK. Residues 295-319 are disordered; that stretch reads AVASPDGKPLPKAGEGIDGETPSTR.

Belongs to the Lgt family.

Its subcellular location is the cell membrane. The enzyme catalyses L-cysteinyl-[prolipoprotein] + a 1,2-diacyl-sn-glycero-3-phospho-(1'-sn-glycerol) = an S-1,2-diacyl-sn-glyceryl-L-cysteinyl-[prolipoprotein] + sn-glycerol 1-phosphate + H(+). Its pathway is protein modification; lipoprotein biosynthesis (diacylglyceryl transfer). In terms of biological role, catalyzes the transfer of the diacylglyceryl group from phosphatidylglycerol to the sulfhydryl group of the N-terminal cysteine of a prolipoprotein, the first step in the formation of mature lipoproteins. The protein is Phosphatidylglycerol--prolipoprotein diacylglyceryl transferase of Corynebacterium glutamicum (strain R).